A 59-amino-acid chain; its full sequence is MAVQQNKKSPSKRGMHRSHDFLRTTPLSVDPGTGEVHLRHHISPNGYYRGKKVIKTKED.

Residues 1–40 (MAVQQNKKSPSKRGMHRSHDFLRTTPLSVDPGTGEVHLRH) form a disordered region.

It belongs to the bacterial ribosomal protein bL32 family.

This chain is Large ribosomal subunit protein bL32, found in Nitrosospira multiformis (strain ATCC 25196 / NCIMB 11849 / C 71).